Here is a 224-residue protein sequence, read N- to C-terminus: Putative adhesin RF_1314 (224 aa).

Positions 1-22 are cleaved as a signal peptide; the sequence is MKKLLLIAATSATILSSSISFA.

The sequence is that of Putative adhesin RF_1314 from Rickettsia felis (strain ATCC VR-1525 / URRWXCal2) (Rickettsia azadi).